A 295-amino-acid polypeptide reads, in one-letter code: Lipoyl synthase (295 aa).

7 residues coordinate [4Fe-4S] cluster: Cys34, Cys39, Cys45, Cys60, Cys64, Cys67, and Ser273. One can recognise a Radical SAM core domain in the interval 46-262 (WNKRHATIMV…KRMAYAKGFS (217 aa)).

Belongs to the radical SAM superfamily. Lipoyl synthase family. Requires [4Fe-4S] cluster as cofactor.

The protein resides in the cytoplasm. It carries out the reaction [[Fe-S] cluster scaffold protein carrying a second [4Fe-4S](2+) cluster] + N(6)-octanoyl-L-lysyl-[protein] + 2 oxidized [2Fe-2S]-[ferredoxin] + 2 S-adenosyl-L-methionine + 4 H(+) = [[Fe-S] cluster scaffold protein] + N(6)-[(R)-dihydrolipoyl]-L-lysyl-[protein] + 4 Fe(3+) + 2 hydrogen sulfide + 2 5'-deoxyadenosine + 2 L-methionine + 2 reduced [2Fe-2S]-[ferredoxin]. The protein operates within protein modification; protein lipoylation via endogenous pathway; protein N(6)-(lipoyl)lysine from octanoyl-[acyl-carrier-protein]: step 2/2. Functionally, catalyzes the radical-mediated insertion of two sulfur atoms into the C-6 and C-8 positions of the octanoyl moiety bound to the lipoyl domains of lipoate-dependent enzymes, thereby converting the octanoylated domains into lipoylated derivatives. This chain is Lipoyl synthase, found in Anaplasma phagocytophilum (strain HZ).